The following is a 699-amino-acid chain: Integrator complex subunit 10 (699 aa).

Serine 220 and serine 370 each carry phosphoserine. Lysine 453 is covalently cross-linked (Glycyl lysine isopeptide (Lys-Gly) (interchain with G-Cter in SUMO2)).

The protein belongs to the Integrator subunit 10 family. Component of the Integrator complex, composed of core subunits INTS1, INTS2, INTS3, INTS4, INTS5, INTS6, INTS7, INTS8, INTS9/RC74, INTS10, INTS11/CPSF3L, INTS12, INTS13, INTS14 and INTS15. The core complex associates with protein phosphatase 2A subunits PPP2CA and PPP2R1A, to form the Integrator-PP2A (INTAC) complex. INTS10 is part of the tail subcomplex, composed of INTS10, INTS13, INTS14 and INTS15.

The protein resides in the nucleus. In terms of biological role, component of the integrator complex, a multiprotein complex that terminates RNA polymerase II (Pol II) transcription in the promoter-proximal region of genes. The integrator complex provides a quality checkpoint during transcription elongation by driving premature transcription termination of transcripts that are unfavorably configured for transcriptional elongation: the complex terminates transcription by (1) catalyzing dephosphorylation of the C-terminal domain (CTD) of Pol II subunit POLR2A/RPB1 and SUPT5H/SPT5, (2) degrading the exiting nascent RNA transcript via endonuclease activity and (3) promoting the release of Pol II from bound DNA. The integrator complex is also involved in terminating the synthesis of non-coding Pol II transcripts, such as enhancer RNAs (eRNAs), small nuclear RNAs (snRNAs), telomerase RNAs and long non-coding RNAs (lncRNAs). Within the integrator complex, INTS10 is part of the integrator tail module that acts as a platform for the recruitment of transcription factors at promoters. May be not involved in the recruitment of cytoplasmic dynein to the nuclear envelope, probably as component of the integrator complex. In Macaca fascicularis (Crab-eating macaque), this protein is Integrator complex subunit 10 (INTS10).